Here is a 148-residue protein sequence, read N- to C-terminus: Putative carbonic anhydrase (148 aa).

In terms of domain architecture, Alpha-carbonic anhydrase spans cysteine 1–histidine 146.

The protein belongs to the alpha-carbonic anhydrase family. It depends on Zn(2+) as a cofactor. In terms of tissue distribution, component of the acid-insoluble organic matrix of the aragonitic skeleton (at protein level).

The protein resides in the secreted. The catalysed reaction is hydrogencarbonate + H(+) = CO2 + H2O. Reversible hydration of carbon dioxide. This Acropora millepora (Staghorn coral) protein is Putative carbonic anhydrase.